Consider the following 420-residue polypeptide: MDRASENRRLAAVGKPVPGIGEMGNRRPLRDINNLVGAPPHPSAIAKKPMLEKSGKEEQKPALVVSHRPMTRNFAASLTRKEQLDHQVSVADAAVVCTDPQKNPIPDGTVDDDVESCESNDYIAVDECNDTDEDESMMDIDSADSGNPLAATEYVEELYKFYRENEEMSCVQPDYMSSQGDINEKMRAILIDWLIEVHHKFELMDETLFLTVNIVDRFLEKQVVPRKKLQLVGVTAMLLACKYEEVAVPVVEDLVLISDRAYTKGQILEMEKLILNTLQFNMSVPTPYVFMRRFLKAAQSDKQLQLLSFFILELSLVEYQMLKYRPSLLAAAAVYTAQCALTRCQQWTKTCELHSRYTGEQLLECSRMMVDFHQKAGAGKLTGVHRKYSTFKFGCAAKTEPALFLLESGAGGYNLQKQPC.

A disordered region spans residues M1–P61. Over residues P49–K60 the composition is skewed to basic and acidic residues.

It belongs to the cyclin family. Cyclin AB subfamily. As to quaternary structure, interacts with CDKB2-1. Expressed in the root apices.

Its function is as follows. Involved in the control of the cell cycle at the G2/M (mitosis) transition. May activate CDKB2-1 kinase. The polypeptide is Cyclin-B2-1 (CYCB2-1) (Oryza sativa subsp. japonica (Rice)).